The chain runs to 471 residues: ATP synthase subunit beta (471 aa).

153 to 160 (GGAGVGKT) contacts ATP.

This sequence belongs to the ATPase alpha/beta chains family. As to quaternary structure, F-type ATPases have 2 components, CF(1) - the catalytic core - and CF(0) - the membrane proton channel. CF(1) has five subunits: alpha(3), beta(3), gamma(1), delta(1), epsilon(1). CF(0) has four main subunits: a(1), b(1), b'(1) and c(9-12).

The protein resides in the cell membrane. The catalysed reaction is ATP + H2O + 4 H(+)(in) = ADP + phosphate + 5 H(+)(out). In terms of biological role, produces ATP from ADP in the presence of a proton gradient across the membrane. The catalytic sites are hosted primarily by the beta subunits. The sequence is that of ATP synthase subunit beta from Roseiflexus sp. (strain RS-1).